A 125-amino-acid chain; its full sequence is Translation initiation factor 5A (125 aa).

Lysine 35 carries the post-translational modification Hypusine.

Belongs to the eIF-5A family.

The protein resides in the cytoplasm. Functionally, functions by promoting the formation of the first peptide bond. The sequence is that of Translation initiation factor 5A (eIF5A) from Methanoregula boonei (strain DSM 21154 / JCM 14090 / 6A8).